A 766-amino-acid polypeptide reads, in one-letter code: 1,4-alpha-glucan branching enzyme GlgB (766 aa).

Asp-431 acts as the Nucleophile in catalysis. The Proton donor role is filled by Glu-484.

Belongs to the glycosyl hydrolase 13 family. GlgB subfamily. As to quaternary structure, monomer.

It catalyses the reaction Transfers a segment of a (1-&gt;4)-alpha-D-glucan chain to a primary hydroxy group in a similar glucan chain.. The protein operates within glycan biosynthesis; glycogen biosynthesis. Catalyzes the formation of the alpha-1,6-glucosidic linkages in glycogen by scission of a 1,4-alpha-linked oligosaccharide from growing alpha-1,4-glucan chains and the subsequent attachment of the oligosaccharide to the alpha-1,6 position. The sequence is that of 1,4-alpha-glucan branching enzyme GlgB from Thermosynechococcus vestitus (strain NIES-2133 / IAM M-273 / BP-1).